Consider the following 1056-residue polypeptide: Kinesin-like protein KIF11 (1056 aa).

Positions 18–359 (NIQVVVRCRP…LEYAHRAKNI (342 aa)) constitute a Kinesin motor domain. Residue 105 to 112 (GQTGTGKT) participates in ATP binding. Lys-146 carries the post-translational modification N6-acetyllysine. 2 coiled-coil regions span residues 364–480 (EVNQ…KEEY) and 736–763 (LEEKCENIQKPLSSVQENIQQKSKDIVN). Thr-458 bears the Phosphothreonine mark. Lys-477 participates in a covalent cross-link: Glycyl lysine isopeptide (Lys-Gly) (interchain with G-Cter in SUMO2). Position 925 is a phosphothreonine (Thr-925). Phosphothreonine; by CDK1 is present on Thr-926. Ser-1033 carries the phosphoserine; by NEK6 modification. A Glycyl lysine isopeptide (Lys-Gly) (interchain with G-Cter in ubiquitin) cross-link involves residue Lys-1034.

The protein belongs to the TRAFAC class myosin-kinesin ATPase superfamily. Kinesin family. BimC subfamily. As to quaternary structure, interacts with the thyroid hormone receptor in the presence of thyroid hormone. Component of a large chromatin remodeling complex, at least composed of MYSM1, PCAF, RBM10 and KIF11/TRIP5. Interacts (via C-terminus) with the kinase NEK6 in both interphase and mitosis. Interacts with RARRES1 and AGBL2. Interacts with TPX2. In terms of processing, phosphorylated exclusively on serine during S phase, but on both serine and Thr-926 during mitosis, so controlling the association of KIF11 with the spindle apparatus (probably during early prophase). Post-translationally, a subset of this protein primarily localized at the spindle pole is phosphorylated by NEK6 during mitosis; phosphorylation is required for mitotic function. Ubiquitinated at Lys-1034 by UHRF1 via 'Lys-63'-linked ubiquitin chains, leading to interaction with spindle assembly factor TPX2, thereby ensuring accurate distribution to the spindles during metaphase.

Its subcellular location is the cytoplasm. The protein resides in the cytoskeleton. It is found in the spindle pole. Its function is as follows. Motor protein required for establishing a bipolar spindle and thus contributing to chromosome congression during mitosis. Required in non-mitotic cells for transport of secretory proteins from the Golgi complex to the cell surface. The polypeptide is Kinesin-like protein KIF11 (KIF11) (Homo sapiens (Human)).